The chain runs to 333 residues: Flap endonuclease 1 (333 aa).

The N-domain stretch occupies residues 1 to 99 (MGVALRDILA…ETNAERKKLR (99 aa)). Mg(2+)-binding residues include Asp28, Asp81, Glu153, Glu155, Asp174, Asp176, and Asp235. An I-domain region spans residues 117–256 (EAYRQARSAT…TALKIVKSGG (140 aa)). Positions 325-333 (GQKTLESFF) are interaction with PCNA.

Belongs to the XPG/RAD2 endonuclease family. FEN1 subfamily. As to quaternary structure, interacts with PCNA. PCNA stimulates the nuclease activity without altering cleavage specificity. Requires Mg(2+) as cofactor.

In terms of biological role, structure-specific nuclease with 5'-flap endonuclease and 5'-3' exonuclease activities involved in DNA replication and repair. During DNA replication, cleaves the 5'-overhanging flap structure that is generated by displacement synthesis when DNA polymerase encounters the 5'-end of a downstream Okazaki fragment. Binds the unpaired 3'-DNA end and kinks the DNA to facilitate 5' cleavage specificity. Cleaves one nucleotide into the double-stranded DNA from the junction in flap DNA, leaving a nick for ligation. Also involved in the base excision repair (BER) pathway. Acts as a genome stabilization factor that prevents flaps from equilibrating into structures that lead to duplications and deletions. Also possesses 5'-3' exonuclease activity on nicked or gapped double-stranded DNA. The chain is Flap endonuclease 1 from Methanoregula boonei (strain DSM 21154 / JCM 14090 / 6A8).